The following is a 140-amino-acid chain: uncharacterized protein (140 aa).

This sequence belongs to the peptidase S24 family.

This is an uncharacterized protein from Haemophilus influenzae (strain ATCC 51907 / DSM 11121 / KW20 / Rd).